Consider the following 294-residue polypeptide: Large ribosomal subunit protein uL2 (294 aa).

2 disordered regions span residues 1 to 37 (MGIR…RPEK) and 228 to 294 (GSVM…RAAQ). Polar residues predominate over residues 10 to 22 (TPSTRHMTVSNFE). A compositionally biased stretch (basic and acidic residues) spans 23–37 (ELSRDENGKRPRPEK). The span at 264–285 (KTRKRNKPSNKFIVRGRRRGGR) shows a compositional bias: basic residues.

The protein belongs to the universal ribosomal protein uL2 family. As to quaternary structure, part of the 50S ribosomal subunit. Forms a bridge to the 30S subunit in the 70S ribosome.

In terms of biological role, one of the primary rRNA binding proteins. Required for association of the 30S and 50S subunits to form the 70S ribosome, for tRNA binding and peptide bond formation. It has been suggested to have peptidyltransferase activity; this is somewhat controversial. Makes several contacts with the 16S rRNA in the 70S ribosome. This chain is Large ribosomal subunit protein uL2, found in Synechococcus sp. (strain JA-3-3Ab) (Cyanobacteria bacterium Yellowstone A-Prime).